We begin with the raw amino-acid sequence, 88 residues long: MLICKVLKPLVSTNRIPGFEHKHLQVVLDGSSNKVAVDAVGCKPGDWVICVGSSAAREAAGSKSYPSDLTIVGIIDHWDPDSPKQIEV.

A BMV domain is found at 1 to 76 (MLICKVLKPL…SDLTIVGIID (76 aa)).

This sequence belongs to the CcmL/EutN family. CsoS4 subfamily. Homopentamer.

The protein resides in the carboxysome. Functionally, probably forms vertices in the carboxysome, a polyhedral inclusion where RuBisCO (ribulose bisphosphate carboxylase, cbbL-cbbS) is sequestered. Has been modeled to induce curvature upon insertion into an otherwise flat hexagonal layer of major carboxysome subunits. Has not been identified in purified carboxysomes; it is expected to be present in very low amounts. The chain is Carboxysome shell vertex protein CsoS4A from Prochlorococcus marinus subsp. pastoris (strain CCMP1986 / NIES-2087 / MED4).